The chain runs to 196 residues: DnaA initiator-associating protein DiaA (196 aa).

The SIS domain occupies 34-196; that stretch reads LVQSLLNGNK…DNTLFPHQDD (163 aa).

It belongs to the SIS family. DiaA subfamily. Homotetramer; dimer of dimers.

In terms of biological role, required for the timely initiation of chromosomal replication via direct interactions with the DnaA initiator protein. This chain is DnaA initiator-associating protein DiaA, found in Shigella flexneri serotype 5b (strain 8401).